The primary structure comprises 194 residues: Gonadal protein gdl (194 aa).

This sequence belongs to the gonadal family. In terms of tissue distribution, in stage 6-14 egg chamber nurse cells and oocytes of adult females and spermatocyte cysts and bundles of maturing sperm of larval, pupal and adult males.

The sequence is that of Gonadal protein gdl (gdl) from Drosophila melanogaster (Fruit fly).